The chain runs to 413 residues: NADH:flavin oxidoreductase FG08077 (413 aa).

53-56 (APLC) lines the FMN pocket. Tyr-58 is a substrate binding site. Residues Ala-88 and Gln-130 each contribute to the FMN site. Residue 211–214 (HAAH) participates in substrate binding. FMN is bound by residues Arg-264 and 370-371 (GR).

It belongs to the NADH:flavin oxidoreductase/NADH oxidase family. NamA subfamily. The cofactor is FMN.

Its pathway is mycotoxin biosynthesis. In terms of biological role, NADH:flavin oxidoreductase; part of the gene cluster that mediates the biosynthesis of butenolide, a mycotoxin that shows antibiotic activity but does not seem to play a major role in the spread of head blight in wheat. Butenolide is derived from glutamic acid via a 4-acetamido-2-butenoic acid intermediate. The predicted function of the NADH:flavin oxidoreductase FG08077, the cytochrome P450 monooxygenase FG08079, the decarboxylase FG08083, and the putative acetyltransferase FG08082 are consistent with this pathway, however, the respective activities of the butelonide biosynthesis cluster enzymes have still to be experimentally determined. The chain is NADH:flavin oxidoreductase FG08077 from Gibberella zeae (strain ATCC MYA-4620 / CBS 123657 / FGSC 9075 / NRRL 31084 / PH-1) (Wheat head blight fungus).